Here is a 245-residue protein sequence, read N- to C-terminus: Putative protein phosphatase 2C-like protein 45 (245 aa).

Positions 1–188 (MEDRFSTITN…DDISVMLIPL (188 aa)) constitute a PPM-type phosphatase domain.

Belongs to the PP2C family.

The chain is Putative protein phosphatase 2C-like protein 45 from Arabidopsis thaliana (Mouse-ear cress).